Consider the following 297-residue polypeptide: Tyrosine recombinase XerD (297 aa).

Residues 2–86 (KKLDPIIEQF…CLRKFFRFLC (85 aa)) enclose the Core-binding (CB) domain. The Tyr recombinase domain maps to 107–291 (QLPKSLSEEQ…AKTRLKSIHK (185 aa)). Catalysis depends on residues arginine 147, lysine 171, histidine 243, arginine 246, and histidine 269. Catalysis depends on tyrosine 278, which acts as the O-(3'-phospho-DNA)-tyrosine intermediate.

Belongs to the 'phage' integrase family. XerD subfamily. As to quaternary structure, forms a cyclic heterotetrameric complex composed of two molecules of XerC and two molecules of XerD.

The protein localises to the cytoplasm. Functionally, site-specific tyrosine recombinase, which acts by catalyzing the cutting and rejoining of the recombining DNA molecules. The XerC-XerD complex is essential to convert dimers of the bacterial chromosome into monomers to permit their segregation at cell division. It also contributes to the segregational stability of plasmids. The polypeptide is Tyrosine recombinase XerD (Haemophilus ducreyi (strain 35000HP / ATCC 700724)).